A 39-amino-acid chain; its full sequence is Gas vesicle protein C (39 aa).

It belongs to the gas vesicle GvpC family.

It localises to the gas vesicle. In terms of biological role, confers stability, involved in shaping gas vesicles, hollow, gas filled proteinaceous nanostructures. During planktonic growth they allow positioning of the organism at a favorable depth for light or nutrient acquisition. In Spirulina sp. (strain CCAP 1475/10), this protein is Gas vesicle protein C.